A 24-amino-acid chain; its full sequence is Cytochrome c3-2 (24 aa).

Positions Gly1–Pro24 are disordered.

Binds 4 heme groups per subunit.

Its subcellular location is the periplasm. Participates in sulfate respiration coupled with phosphorylation by transferring electrons from the enzyme dehydrogenase to ferredoxin. This chain is Cytochrome c3-2, found in Nitratidesulfovibrio vulgaris (Desulfovibrio vulgaris).